Consider the following 88-residue polypeptide: Small ribosomal subunit protein bS20 (88 aa).

Residues 1 to 28 (MANTSSAKKATRKIARRTAVNKSRRTQM) are disordered.

In terms of biological role, binds directly to 16S ribosomal RNA. This chain is Small ribosomal subunit protein bS20, found in Rhodopseudomonas palustris (strain ATCC BAA-98 / CGA009).